The primary structure comprises 441 residues: Mitochondrial distribution and morphology protein 12 (441 aa).

The SMP-LTD domain maps to 1–441 (MSIDIDWERA…VYPSFWTFLV (441 aa)). A disordered region spans residues 180-289 (TPLRAVTRGN…SGTPPRRMRE (110 aa)). Polar residues-rich tracts occupy residues 226 to 245 (SRPS…SVST) and 253 to 263 (SSQTVLANNPG).

Belongs to the MDM12 family. In terms of assembly, component of the ER-mitochondria encounter structure (ERMES) or MDM complex, composed of MMM1, MDM10, MDM12 and MDM34. An MMM1 homodimer associates with one molecule of MDM12 on each side in a pairwise head-to-tail manner, and the SMP-LTD domains of MMM1 and MDM12 generate a continuous hydrophobic tunnel for phospholipid trafficking.

It localises to the mitochondrion outer membrane. The protein localises to the endoplasmic reticulum membrane. Component of the ERMES/MDM complex, which serves as a molecular tether to connect the endoplasmic reticulum (ER) and mitochondria. Components of this complex are involved in the control of mitochondrial shape and protein biogenesis, and function in nonvesicular lipid trafficking between the ER and mitochondria. MDM12 is required for the interaction of the ER-resident membrane protein MMM1 and the outer mitochondrial membrane-resident beta-barrel protein MDM10. The MDM12-MMM1 subcomplex functions in the major beta-barrel assembly pathway that is responsible for biogenesis of all mitochondrial outer membrane beta-barrel proteins, and acts in a late step after the SAM complex. The MDM10-MDM12-MMM1 subcomplex further acts in the TOM40-specific pathway after the action of the MDM12-MMM1 complex. Essential for establishing and maintaining the structure of mitochondria and maintenance of mtDNA nucleoids. The sequence is that of Mitochondrial distribution and morphology protein 12 from Paracoccidioides brasiliensis (strain Pb18).